The chain runs to 408 residues: LL-diaminopimelate aminotransferase (408 aa).

Residues Tyr15 and Gly42 each coordinate substrate. Residues Tyr72, 108 to 109, Tyr132, Asn187, Tyr218, and 246 to 248 each bind pyridoxal 5'-phosphate; these read SK and SFS. Positions 109, 132, and 187 each coordinate substrate. Lys249 carries the post-translational modification N6-(pyridoxal phosphate)lysine. Arg257 and Asn292 together coordinate pyridoxal 5'-phosphate. Residues Asn292 and Arg388 each contribute to the substrate site.

This sequence belongs to the class-I pyridoxal-phosphate-dependent aminotransferase family. LL-diaminopimelate aminotransferase subfamily. Homodimer. Pyridoxal 5'-phosphate serves as cofactor.

The catalysed reaction is (2S,6S)-2,6-diaminopimelate + 2-oxoglutarate = (S)-2,3,4,5-tetrahydrodipicolinate + L-glutamate + H2O + H(+). It functions in the pathway amino-acid biosynthesis; L-lysine biosynthesis via DAP pathway; LL-2,6-diaminopimelate from (S)-tetrahydrodipicolinate (aminotransferase route): step 1/1. Involved in the synthesis of meso-diaminopimelate (m-DAP or DL-DAP), required for both lysine and peptidoglycan biosynthesis. Catalyzes the direct conversion of tetrahydrodipicolinate to LL-diaminopimelate. This Leptospira interrogans serogroup Icterohaemorrhagiae serovar Lai (strain 56601) protein is LL-diaminopimelate aminotransferase.